Consider the following 491-residue polypeptide: Neuronal acetylcholine receptor subunit beta-2 (491 aa).

An N-terminal signal peptide occupies residues 1-18; that stretch reads MALLRVLCLLAALRRSLC. The Extracellular portion of the chain corresponds to 19-226; the sequence is TDTEERLVEY…ITYDFIIRRK (208 aa). 2 N-linked (GlcNAc...) asparagine glycosylation sites follow: N44 and N161. A disulfide bridge connects residues C148 and C162. The helical transmembrane segment at 227–251 threads the bilayer; it reads PLFYTINLIIPCILITSLAILVFYL. The Cytoplasmic segment spans residues 252 to 258; the sequence is PSDCGEK. Residues 259-277 form a helical membrane-spanning segment; sequence MTLCISVLLALTVFLLLIS. Residues 278–292 lie on the Extracellular side of the membrane; the sequence is KIVPPTSLDVPLVGK. The chain crosses the membrane as a helical span at residues 293–314; it reads YLMFTMVLVTFSIVTSVCVLNV. Residues 315-449 are Cytoplasmic-facing; the sequence is HHRSPTTHTM…WKYVAMVIDR (135 aa). A helical membrane pass occupies residues 450–468; that stretch reads LFLWIFVFVCVFGTVGMFL.

Belongs to the ligand-gated ion channel (TC 1.A.9) family. Acetylcholine receptor (TC 1.A.9.1) subfamily. Beta-2/CHRNB2 sub-subfamily. In terms of assembly, neuronal AChR is a heteropentamer composed of two different types of subunits: alpha and beta. CHRNB2/Beta-2 subunit can be combined to CHRNA2/alpha-2, CHRNA3/alpha-3 or CHRNA4/alpha-4, CHRNA5/alpha-5, CHRNA6/alpha-6 and CHRNB3/beta-3 to give rise to functional receptors.

It localises to the synaptic cell membrane. It is found in the cell membrane. It carries out the reaction Ca(2+)(in) = Ca(2+)(out). The enzyme catalyses K(+)(in) = K(+)(out). The catalysed reaction is Na(+)(in) = Na(+)(out). Its activity is regulated as follows. Activated by a myriad of ligands such as acetylcholine, cytisine, nicotine, choline and epibatidine. nAChR activity is inhibited by the antagonist alpha-conotoxins BuIA, PnIA, PnIC, GID and MII, small disulfide-constrained peptides from cone snails. Functionally, component of neuronal acetylcholine receptors (nAChRs) that function as pentameric, ligand-gated cation channels with high calcium permeability among other activities. nAChRs are excitatory neurotrasnmitter receptors formed by a collection of nAChR subunits known to mediate synaptic transmission in the nervous system and the neuromuscular junction. Each nAchR subunit confers differential attributes to channel properties, including activation, deactivation and desensitization kinetics, pH sensitivity, cation permeability, and binding to allosteric modulators. CHRNB2 forms heteropentameric neuronal acetylcholine receptors with CHRNA2, CHRNA3, CHRNA4 and CHRNA6, as well as CHRNA5 and CHRNB3 as accesory subunits. The sequence is that of Neuronal acetylcholine receptor subunit beta-2 (CHRNB2) from Gallus gallus (Chicken).